The primary structure comprises 301 residues: F-actin-capping protein subunit beta (301 aa).

Ser31 carries the phosphoserine modification. Lys264 is subject to N6-acetyllysine.

Belongs to the F-actin-capping protein beta subunit family. In terms of assembly, component of the F-actin capping complex, composed of a heterodimer of an alpha and a beta subunit. Subunit of dynactin, a multiprotein complex part of a tripartite complex with dynein and a adapter, such as BICDL1, BICD2 or HOOK3. The dynactin complex is built around ACTR1A/ACTB filament and consists of an actin-related filament composed of a shoulder domain, a pointed end and a barbed end. Its length is defined by its flexible shoulder domain. The soulder is composed of 2 DCTN1 subunits, 4 DCTN2 and 2 DCTN3. The 4 DCNT2 (via N-terminus) bind the ACTR1A filament and act as molecular rulers to determine the length. The pointed end is important for binding dynein-dynactin cargo adapters. Consists of 4 subunits: ACTR10, DCNT4, DCTN5 and DCTN6. The barbed end is composed of a CAPZA1:CAPZB heterodimers, which binds ACTR1A/ACTB filament and dynactin and stabilizes dynactin. Interacts with ARHGAP17. Interaction with RCSD1/CAPZIP. Component of the WASH complex, composed of F-actin-capping protein subunit alpha (CAPZA1, CAPZA2 or CAPZA3), F-actin-capping protein subunit beta (CAPZB), WASH (WASHC1, WASH2P, WASH3P, WASH4P, WASH5P or WASH6P), WASHC2 (WASHC2A or WASHC2C), WASHC3, WASHC4 and WASHC5. Interacts with ACTG1. Directly interacts with CRACD; this interaction decreases binding to actin. The isoform beta-3 is predominantly expressed in the testis. It is only detected in total sperm, sperm heads and the calyx fraction, but not in sperm tails or any supernatant fraction. Weaker expression also found in brain.

The protein resides in the cytoplasm. It is found in the cytoskeleton. The protein localises to the perinuclear theca. Its subcellular location is the calyx. Functionally, F-actin-capping proteins bind in a Ca(2+)-independent manner to the fast growing ends of actin filaments (barbed end) thereby blocking the exchange of subunits at these ends. Unlike other capping proteins (such as gelsolin and severin), these proteins do not sever actin filaments. Plays a role in the regulation of cell morphology and cytoskeletal organization. Forms, with CAPZB, the barbed end of the fast growing ends of actin filaments in the dynactin complex and stabilizes dynactin structure. The dynactin multiprotein complex activates the molecular motor dynein for ultra-processive transport along microtubules. The polypeptide is F-actin-capping protein subunit beta (CAPZB) (Bos taurus (Bovine)).